The sequence spans 485 residues: Glycogen synthase (485 aa).

Lysine 21 provides a ligand contact to ADP-alpha-D-glucose.

It belongs to the glycosyltransferase 1 family. Bacterial/plant glycogen synthase subfamily.

The enzyme catalyses [(1-&gt;4)-alpha-D-glucosyl](n) + ADP-alpha-D-glucose = [(1-&gt;4)-alpha-D-glucosyl](n+1) + ADP + H(+). The protein operates within glycan biosynthesis; glycogen biosynthesis. Synthesizes alpha-1,4-glucan chains using ADP-glucose. The chain is Glycogen synthase from Pseudomonas syringae pv. syringae (strain B728a).